The sequence spans 657 residues: MSDNQDILAVIALTLPDGSVKTFPIGTTGNDVALSIGRKLAQDALALRVNGVAIDLSTPLTADAAIEIITFSSPAGQDIFWHSSSHLMAQAIEELYPGSKFGAGPSIEQGFYYDVASTHRFREEDLRKIEERMLEISKRDIQIRREEMSRTDAIEFFKTVRNDPYKVEILEDTLKEVERVSLYHQDGFTDLCIGPHIPSTSKVKAVLLSNISSSYWRGDSARENMQRIYGITFPSEKLLKEHVARLEEAKRRDHRKLGAELELFMLSPEVGSGLPIWLPKGAIIRNELETFLKEEQRKRGYLPVYTPHIGNIELYKRSGHYPYYSDSQFPPLTYHDEEGKQEQYLLKPMNCPHHHLIYSSKMRSYRDLPLRLTEFGTVYRHEQSGELNGLVRARGFTQDDSHIYCRPDQLVDEICSAIELTQFVFGTLGFSEVQTRLSMHDPENQAKYGGTAEVWEQAEKDVQEAADRMGIDYFIGVGEASFYGPKIDFIVRDALGRKWQLGTVQVDYVMPERFDLTYTGSDGQKHRPVVIHRAPFGSMERFIGVLIEHTAGNFPLWLAPVQAVVLPIAEDVLDYAKSVHQALLAAGIRAELDTRSEKIGKKIRDAEVSKIPCMIVIGQKEQESGEVSLRRHRIGDEGRFSVSGLIEKLKTEITGKS.

The region spanning 7–70 (ILAVIALTLP…TADAAIEIIT (64 aa)) is the TGS domain. The interval 253-555 (DHRKLGAELE…LIEHTAGNFP (303 aa)) is catalytic. Zn(2+) contacts are provided by Cys-351, His-402, and His-532.

This sequence belongs to the class-II aminoacyl-tRNA synthetase family. Homodimer. Zn(2+) is required as a cofactor.

Its subcellular location is the cytoplasm. It carries out the reaction tRNA(Thr) + L-threonine + ATP = L-threonyl-tRNA(Thr) + AMP + diphosphate + H(+). In terms of biological role, catalyzes the attachment of threonine to tRNA(Thr) in a two-step reaction: L-threonine is first activated by ATP to form Thr-AMP and then transferred to the acceptor end of tRNA(Thr). Also edits incorrectly charged L-seryl-tRNA(Thr). The polypeptide is Threonine--tRNA ligase (Pelodictyon phaeoclathratiforme (strain DSM 5477 / BU-1)).